A 425-amino-acid chain; its full sequence is MQQPPSQPQPGMGGPPPPPQGAAGQPPQWGAIPPPMPPHQYGAPPPQQPPAMWGQPPPQAHYGQVPPPQPYYAAPPPQAMPAPAAADEVKTLWIGDLQPWMDESYIYNCFAATGEVQSVKLIRDKQSGQLQGYGFVEFTSRAAADRILQTYNGQMMPNVEMVFRLNWASAGEKRDDTPDYTIFVGDLAADVTDYLLQETFRVHYPSVKGAKVVTDKMTMRSKGYGFVKFGDPTEQARAMTEMNGMLCSSRPMRIGPAANKKTTGVQERVPNAQGAQSENDPNNTTIFVGGLDPNVTEDVLKQVFAPYGEVVHVKIPVGKRCGFVQYVNRPSAEQALAVLQGTLIGGQNVRLSWGRSLSNKQPQHDSNQWGAGAGAGGYYGGYGQGYEAYGGYAQPQDPNMYGYGAYAGYPNYQQQQVAQQQPPQQ.

The span at 1 to 20 (MQQPPSQPQPGMGGPPPPPQ) shows a compositional bias: pro residues. The interval 1 to 82 (MQQPPSQPQP…AAPPPQAMPA (82 aa)) is disordered. Over residues 21-31 (GAAGQPPQWGA) the composition is skewed to low complexity. The span at 32–80 (IPPPMPPHQYGAPPPQQPPAMWGQPPPQAHYGQVPPPQPYYAAPPPQAM) shows a compositional bias: pro residues. RRM domains are found at residues 90 to 170 (KTLW…WASA), 180 to 259 (YTIF…PAAN), and 284 to 356 (TTIF…WGRS).

The protein belongs to the polyadenylate-binding RBP45 family. As to quaternary structure, interacts with RBP-P. Interacts with RAB5A.

Its subcellular location is the nucleus. It localises to the cytoplasm. RNA-binding protein that binds to a cis-localization element or zipcode, within the 5'-CDS of prolamine RNA. Binds strongly to glutelin and prolamin mRNAs, particularly to 3'-UTR and zipcode RNA. Recognizes and binds to glutelin zipcode RNA, which is required for proper mRNA localization to cisternal endoplasmic reticulum. Recognizes and binds to prolamin zipcode RNA, which is required for proper mRNA localization to the protein body endoplasmic reticulum that delimits the prolamine intracisternal inclusion granules. Required for the correct localization of glutelin and prolamine mRNA in endosperm cells during grain development. RBP-L and RBP-P form a quaternary complex with the membrane trafficking factors NSF and RAB5A. This quaternay complex carries glutelin mRNAs for active transport on endosomes to the cortical endoplasmic reticulum membrane, and enables endosome-mediated glutelin mRNA transport in endosperm cells. The sequence is that of RNA-binding protein L from Oryza sativa subsp. japonica (Rice).